The chain runs to 493 residues: Farnesoate epoxidase (493 aa).

Residues 1–24 form the signal peptide; sequence MLALIVLCFILFFYIISRRHRGLC. Cys-433 provides a ligand contact to heme.

It belongs to the cytochrome P450 family. It depends on heme as a cofactor. In terms of tissue distribution, constitutively expressed in corpora allata from the first instar larval to adult stages.

The enzyme catalyses (2E,6E)-farnesoate + reduced [NADPH--hemoprotein reductase] + O2 = juvenile hormone III carboxylate + oxidized [NADPH--hemoprotein reductase] + H2O + H(+). Functionally, catalyzes the conversion of farnesoate to juvenile hormone III acid in juvenile hormone biosynthesis. The sequence is that of Farnesoate epoxidase from Bombyx mori (Silk moth).